A 572-amino-acid polypeptide reads, in one-letter code: Transmembrane glycoprotein NMB (572 aa).

The N-terminal stretch at 1 to 22 (MECLYYFLGFLLLAARLPLDAA) is a signal peptide. Topologically, residues 23 to 498 (KRFHDVLGNE…DPASPLRMAN (476 aa)) are extracellular. A Cell attachment site motif is present at residues 64–66 (RGD). 10 N-linked (GlcNAc...) asparagine glycosylation sites follow: asparagine 93, asparagine 134, asparagine 146, asparagine 200, asparagine 249, asparagine 275, asparagine 296, asparagine 300, asparagine 306, and asparagine 312. One can recognise a PKD domain in the interval 240–327 (VTMFQKNDRN…AAPGPCPPPP (88 aa)). The interval 320–362 (PGPCPPPPPPPRPSKPTPSLATTLKSYDSNTPGPAGDNPLELS) is disordered. The segment covering 321 to 335 (GPCPPPPPPPRPSKP) has biased composition (pro residues). Over residues 338 to 351 (SLATTLKSYDSNTP) the composition is skewed to polar residues. N-linked (GlcNAc...) asparagine glycosylation is found at asparagine 459 and asparagine 467. A helical membrane pass occupies residues 499 to 519 (SALISVGCLAIFVTVISLLVY). The Cytoplasmic segment spans residues 520–572 (KKHKEYNPIENSPGNVVRSKGLSVFLNRAKAVFFPGNQEKDPLLKNQEFKGVS). Serine 542 is modified (phosphoserine).

This sequence belongs to the PMEL/NMB family. As to expression, widely expressed, but very low expression, if any, in the brain. Expressed in the epidermis with higher levels in melanocytes compared with keratinocytes and Langerhans cells (at protein level). Expressed in peripheral blood, but not bone marrow mononuclear cells. Expressed in tissue macrophages, including liver Kuppfer cells and lung alveolar macrophages, in podocytes and in some cells of the ciliary body of the eye (at protein level). May be overexpressed in various cancers, including melanoma and glioblastoma multiforme.

It localises to the cell membrane. It is found in the melanosome membrane. Its subcellular location is the early endosome membrane. Functionally, could be a melanogenic enzyme. In Homo sapiens (Human), this protein is Transmembrane glycoprotein NMB (GPNMB).